A 128-amino-acid chain; its full sequence is Protein Wnt-8 (128 aa).

A lipid anchor (O-palmitoleoyl serine) is attached at Ser-1. 2 disulfides stabilise this stretch: Cys-71-Cys-109 and Cys-87-Cys-102. N-linked (GlcNAc...) asparagine glycans are attached at residues Asn-74 and Asn-93.

It belongs to the Wnt family. Post-translationally, palmitoleoylation is required for efficient binding to frizzled receptors. Depalmitoleoylation leads to Wnt signaling pathway inhibition. In terms of processing, proteolytic processing by tiki1 and tiki2 promotes oxidation and formation of large disulfide-bond oligomers, leading to inactivation of wnt8.

Its subcellular location is the secreted. The protein localises to the extracellular space. It is found in the extracellular matrix. Its function is as follows. Ligand for members of the frizzled family of seven transmembrane receptors. Probable developmental protein. May be a signaling molecule which affects the development of discrete regions of tissues. Is likely to signal over only few cell diameters. In Thunnus thynnus (Atlantic bluefin tuna), this protein is Protein Wnt-8 (wnt8).